Reading from the N-terminus, the 74-residue chain is Male-specific sperm protein Mst84Db (74 aa).

It belongs to the MST(3)CGP family. In terms of tissue distribution, testis.

This chain is Male-specific sperm protein Mst84Db (Mst84Db), found in Drosophila melanogaster (Fruit fly).